A 100-amino-acid polypeptide reads, in one-letter code: ESAT-6-like protein EsxT (100 aa).

It belongs to the WXG100 family. ESAT-6 subfamily. In terms of assembly, forms a tight 1:1 complex with EsxU.

Its subcellular location is the secreted. This Mycobacterium tuberculosis (strain CDC 1551 / Oshkosh) protein is ESAT-6-like protein EsxT.